The primary structure comprises 337 residues: MIQDGIKKIIQREDLSETEMSAVMSEIMSGEATDAQIGAFMGALATKGETFEELAGAARTMRRKAARIQVTSPVIVDTCGTGGDRKGTFNISTTAAFVVAGCGVTVAKHGNRSVSSQCGSADLLEALGMRLDAPAEVVEEAIGRIGIGFLFAPLFHGAMRHAARARKEVGVRSIFNMLGPLTNPAGANCQVLGVYAPQLTEMFAQALRLLGARRAFVVHGQDGLDEISVCAPTRVSELDGGLVRTYDLQPELLLGRKADPEDLAGGDPGVNAKITRDVLGGAIGPRRDVVVLNAAAALIAAGAAEGFPSAVRNAEESIDGGKAIEKLEALVRYTNEN.

Residues Gly80, 83-84 (GD), Thr88, 90-93 (NIST), 108-116 (KHGNRSVSS), and Ser120 contribute to the 5-phospho-alpha-D-ribose 1-diphosphate site. Gly80 serves as a coordination point for anthranilate. Ser92 is a Mg(2+) binding site. Anthranilate is bound at residue Asn111. Position 166 (Arg166) interacts with anthranilate. Mg(2+) contacts are provided by Asp225 and Glu226.

This sequence belongs to the anthranilate phosphoribosyltransferase family. In terms of assembly, homodimer. Requires Mg(2+) as cofactor.

It catalyses the reaction N-(5-phospho-beta-D-ribosyl)anthranilate + diphosphate = 5-phospho-alpha-D-ribose 1-diphosphate + anthranilate. Its pathway is amino-acid biosynthesis; L-tryptophan biosynthesis; L-tryptophan from chorismate: step 2/5. Functionally, catalyzes the transfer of the phosphoribosyl group of 5-phosphorylribose-1-pyrophosphate (PRPP) to anthranilate to yield N-(5'-phosphoribosyl)-anthranilate (PRA). The polypeptide is Anthranilate phosphoribosyltransferase (Syntrophobacter fumaroxidans (strain DSM 10017 / MPOB)).